Consider the following 1121-residue polypeptide: MNSIDAVVRYSPLRNNLCNLPSAITTMLFSADFNIQQIIVELSWVPHQRAAQRRIAYCGWAGGITKTSSSNPVIEIDRSLASAIDLQENVNVTVNVHIDAVKAITVELEPVTSNDWEIVETHAQVLETYLLNQTRCVYPNQVLVVYPTPQTTARLLVKKIEPEVSTFAQLFNDTEVQIAPKVQKRPSISSVRSDSSGHRIRRVRSSTSTATGRRSVTNNGEVLPSMLRRSITLPNNTYAHVNDSKSGGYKVYCNLNELIPALQNAHFVSVSVLVGPGTPDRTGLTSSKIKQLNDSIDQAAQTQTNAAGSSHPPESSYTETGKVIAELVHDSKSPKGNVGLSELLACSLGIENTVGNLISLEQARKPLIKNPLDTLLTQLMQLLSPLLDSCTFTNCVKLPKIGTLLPNGGLLQFKRIKSGWTTPLGKDNVSLEIGEEILRPESFIPSYDLLPDRKTHVRTQSDQYPTAQENLIESLSKIASGGSLLFGTSGSGKSLVISQVAQIVTNKGHFVKLLNCDKIMSESYNNLRGIFEDIFSEVSWKAPSLLILEDLDSLIPAEQEHSDSSQSRQLSEYFISKLSALSINRDITILASSKSKESLNSLIFTTHLIEHDFQLRAPDKEARKQILQSYLDTLNVFCSEGELLNNIAVETEGYLPKDLKVLCDRAYHDLISRDILADSDSELDIEESSTPILNGSVGDIANKQSEIENGISGLELTNNSSSTIAVDKHGATIQKDNFDSALSGYIPQSLRGVKLQKSDVRWDDIGGLRDAKSILLETLEWPTKYAPIFSSCPLRLRSGILLYGYPGCGKTLLASAVAAQCGLNFISIKGPEILNKYIGASEQSVRELFERAQAAKPCILFFDEFDSIAPKRGHDSTGVTDRVVNQMLTQMDGAEGLDGVYVLAATSRPDLIDSALLRPGRLDKSVICDMPDFDDRLDILQSVTRNMNVSKSVNLSSVAGECSGFSGADLQALAYNAYLKAVHEKLTKDESMAMAGEMDDNDDKKRMVECFQFSGNTEKKSLIELKPSDRATVIKKLEHLYQGNGNHAEGETKSKLATTAANSVIITSKDFEDSLSETKQSISQSEKRKLEAIYQQFISGRDGNMPDGTASNEIGARSTLM.

Disordered stretches follow at residues 187 to 221 (SISS…NNGE) and 1099 to 1121 (SGRD…STLM). Low complexity predominate over residues 205 to 217 (SSTSTATGRRSVT).

This sequence belongs to the AAA ATPase family. In terms of assembly, interacts with PEX6; forming the PEX1-PEX6 AAA ATPase complex, which is composed of a heterohexamer formed by a trimer of PEX1-PEX6 dimers.

It is found in the membrane. It carries out the reaction ATP + H2O = ADP + phosphate + H(+). Component of the PEX1-PEX6 AAA ATPase complex involved in peroxisome biosynthesis. The complex acts as a protein dislocase complex that mediates the ATP-dependent extraction of the PEX5 receptor from peroxisomal membranes, an essential step for PEX5 recycling. Specifically recognizes PEX5 monoubiquitinated at 'Cys-6', and pulls it out of the peroxisome lumen through the PEX2-PEX10-PEX12 retrotranslocation channel. Extraction by the PEX1-PEX6 AAA ATPase complex is accompanied by unfolding of the TPR repeats and release of bound cargo from PEX5. The sequence is that of Peroxisomal ATPase PEX1 from Komagataella phaffii (strain GS115 / ATCC 20864) (Yeast).